A 67-amino-acid polypeptide reads, in one-letter code: ATP synthase protein 8 (67 aa).

Residues 8-24 (TWSITIMSMIMTLFIVF) traverse the membrane as a helical segment. K54 is subject to N6-acetyllysine; alternate. At K54 the chain carries N6-succinyllysine; alternate. K57 carries the N6-acetyllysine modification.

Belongs to the ATPase protein 8 family. As to quaternary structure, F-type ATPases have 2 components, CF(1) - the catalytic core - and CF(0) - the membrane proton channel. Component of an ATP synthase complex composed of ATP5PB, ATP5MC1, ATP5F1E, ATP5PD, ATP5ME, ATP5PF, ATP5MF, MT-ATP6, MT-ATP8, ATP5F1A, ATP5F1B, ATP5F1D, ATP5F1C, ATP5PO, ATP5MG, ATP5MK and ATP5MJ. Interacts with PRICKLE3.

The protein resides in the mitochondrion membrane. Functionally, mitochondrial membrane ATP synthase (F(1)F(0) ATP synthase or Complex V) produces ATP from ADP in the presence of a proton gradient across the membrane which is generated by electron transport complexes of the respiratory chain. F-type ATPases consist of two structural domains, F(1) - containing the extramembraneous catalytic core and F(0) - containing the membrane proton channel, linked together by a central stalk and a peripheral stalk. During catalysis, ATP synthesis in the catalytic domain of F(1) is coupled via a rotary mechanism of the central stalk subunits to proton translocation. Part of the complex F(0) domain. Minor subunit located with subunit a in the membrane. The sequence is that of ATP synthase protein 8 (MT-ATP8) from Felis silvestris lybica (African wildcat).